Reading from the N-terminus, the 274-residue chain is Ribosome biogenesis protein UTP30 (274 aa).

The protein belongs to the universal ribosomal protein uL1 family. Highly divergent. As to quaternary structure, component of the 90S pre-ribosomes. Interacts with FAF1.

The protein localises to the nucleus. The protein resides in the nucleolus. Its function is as follows. Involved in rRNA-processing and ribosome biosynthesis. The chain is Ribosome biogenesis protein UTP30 (UTP30) from Saccharomyces cerevisiae (strain ATCC 204508 / S288c) (Baker's yeast).